The primary structure comprises 33 residues: Cytochrome b6-f complex subunit 8 (33 aa).

A helical membrane pass occupies residues 2–22 (LFTIAWASLAAVFSFSIAMVV).

Belongs to the PetN family. As to quaternary structure, the 4 large subunits of the cytochrome b6-f complex are cytochrome b6, subunit IV (17 kDa polypeptide, PetD), cytochrome f and the Rieske protein, while the 4 small subunits are PetG, PetL, PetM and PetN. The complex functions as a dimer.

It is found in the cellular thylakoid membrane. Its function is as follows. Component of the cytochrome b6-f complex, which mediates electron transfer between photosystem II (PSII) and photosystem I (PSI), cyclic electron flow around PSI, and state transitions. The protein is Cytochrome b6-f complex subunit 8 of Synechococcus sp. (strain CC9311).